The sequence spans 520 residues: GMP synthase [glutamine-hydrolyzing] (520 aa).

A Glutamine amidotransferase type-1 domain is found at Arg8–Asp202. The active-site Nucleophile is the Cys86. Residues His177 and Glu179 contribute to the active site. One can recognise a GMPS ATP-PPase domain in the interval Trp203–Arg395. Ser230–Ser236 provides a ligand contact to ATP.

In terms of assembly, homodimer.

It carries out the reaction XMP + L-glutamine + ATP + H2O = GMP + L-glutamate + AMP + diphosphate + 2 H(+). It participates in purine metabolism; GMP biosynthesis; GMP from XMP (L-Gln route): step 1/1. Its function is as follows. Catalyzes the synthesis of GMP from XMP. The sequence is that of GMP synthase [glutamine-hydrolyzing] from Dinoroseobacter shibae (strain DSM 16493 / NCIMB 14021 / DFL 12).